Consider the following 629-residue polypeptide: tRNA uridine 5-carboxymethylaminomethyl modification enzyme MnmG (629 aa).

Position 13–18 (Gly13–Gly18) interacts with FAD. Gly273–Phe287 serves as a coordination point for NAD(+).

This sequence belongs to the MnmG family. In terms of assembly, homodimer. Heterotetramer of two MnmE and two MnmG subunits. Requires FAD as cofactor.

The protein localises to the cytoplasm. In terms of biological role, NAD-binding protein involved in the addition of a carboxymethylaminomethyl (cmnm) group at the wobble position (U34) of certain tRNAs, forming tRNA-cmnm(5)s(2)U34. This is tRNA uridine 5-carboxymethylaminomethyl modification enzyme MnmG from Colwellia psychrerythraea (strain 34H / ATCC BAA-681) (Vibrio psychroerythus).